The chain runs to 100 residues: Small ribosomal subunit protein uS14c (100 aa).

Belongs to the universal ribosomal protein uS14 family. In terms of assembly, part of the 30S ribosomal subunit.

The protein localises to the plastid. The protein resides in the chloroplast. Functionally, binds 16S rRNA, required for the assembly of 30S particles. This is Small ribosomal subunit protein uS14c from Cyanidioschyzon merolae (strain NIES-3377 / 10D) (Unicellular red alga).